Consider the following 275-residue polypeptide: Large ribosomal subunit protein uL2c (275 aa).

Disordered regions lie at residues 29 to 60 (PEKSLTYGRHRSQGRNNRGIITSRHRGGGHKR) and 225 to 252 (MNPVDHPHGGGEGRAPIGRSKPVTPWGH). Residues 51–60 (SRHRGGGHKR) are compositionally biased toward basic residues.

Belongs to the universal ribosomal protein uL2 family. Part of the 50S ribosomal subunit.

The protein resides in the plastid. Its subcellular location is the chloroplast. The polypeptide is Large ribosomal subunit protein uL2c (rpl2) (Chlorokybus atmophyticus (Soil alga)).